The primary structure comprises 223 residues: Endonuclease NucS (223 aa).

The protein belongs to the NucS endonuclease family.

It localises to the cytoplasm. Cleaves both 3' and 5' ssDNA extremities of branched DNA structures. The protein is Endonuclease NucS of Mycolicibacterium vanbaalenii (strain DSM 7251 / JCM 13017 / BCRC 16820 / KCTC 9966 / NRRL B-24157 / PYR-1) (Mycobacterium vanbaalenii).